The sequence spans 330 residues: Aspartate--ammonia ligase (330 aa).

It belongs to the class-II aminoacyl-tRNA synthetase family. AsnA subfamily. Homodimer.

It is found in the cytoplasm. The catalysed reaction is L-aspartate + NH4(+) + ATP = L-asparagine + AMP + diphosphate + H(+). The protein operates within amino-acid biosynthesis; L-asparagine biosynthesis; L-asparagine from L-aspartate (ammonia route): step 1/1. The protein is Aspartate--ammonia ligase of Salmonella typhi.